Consider the following 382-residue polypeptide: uncharacterized protein (382 aa).

Helical transmembrane passes span 8–28, 45–65, 75–95, 102–122, 131–151, 157–177, 204–224, 231–251, 270–290, 291–311, 325–345, and 349–369; these read VMLLLCGLLLLTLAIAVLNTL, MVSSSYFTGNLVGTLFTGYLI, YLASLIFAAGCVGLGGMVGFW, FIAGIGCAMIWVVVESALMCS, LLAAYMMAYYMGTFLGQLLVS, LLHVLPWVTGMILAGILPLLF, LGVNGCIISGIVLGSLYGLMP, GMANASIGFWMAVLVSAGILG, VQVFVVILGSIAMLTQAAMAP, ALFILGAAGFTLYPVAMAWAC, ALLLSYTVGSLLGPSFAAMLM, and SDNLLFIMIASVSFIYLLMLL.

This sequence belongs to the major facilitator superfamily. YcaD (TC 2.A.1.26) family.

The protein resides in the cell inner membrane. This is an uncharacterized protein from Salmonella dublin (strain CT_02021853).